The following is a 1255-amino-acid chain: Period circadian protein homolog 2 (1255 aa).

The disordered stretch occupies residues 1-79; it reads MNGYAEFPPS…EPPDARQSPD (79 aa). The segment covering 35-56 has biased composition (polar residues); it reads SSGSSGHETNENCSTGRDSQGS. Positions 111 to 120 match the Nuclear export signal 1 motif; the sequence is LIKTLKELKV. Residues 181–248 form the PAS 1 domain; sequence VTSEHIVKNA…FHSFTSPYKL (68 aa). The short motif at 308–312 is the LXXLL element; the sequence is LCCLL. Residues 321–387 form the PAS 2 domain; sequence YEAPRIPPEK…MLAIHKKILQ (67 aa). The PAC domain maps to 395–438; the sequence is YSPIRFRARNGEYITLDTSWSSFINPWSRKISFIIGRHKVRVGP. The Nuclear export signal 2 motif lies at 462-471; that stretch reads LTEQIHRLLL. 2 disordered regions span residues 473 to 557 and 617 to 646; these read PVPH…AVPA and RSSD…SRTG. The important for protein stability stretch occupies residues 480–484; that stretch reads SGYGS. Over residues 504–516 the composition is skewed to basic and acidic residues; sequence NGHEDSRRRRAEI. The tract at residues 512 to 717 is CSNK1E binding domain; the sequence is RRAEICKNGN…ALACGLSQEK (206 aa). A phosphoserine mark is found at S527, S530, S533, and S540. Basic and acidic residues predominate over residues 529-541; the sequence is YSHESGEQKKKSV. 6 positions are modified to phosphoserine: S662, S696, S700, S714, S766, and S771. Disordered regions lie at residues 764-838 and 931-985; these read ERSK…DTSQ and FPSH…QSRS. Positions 789–805 match the Nuclear localization signal motif; the sequence is KKTGKNRKLKSKRVKPR. Residues 790–803 are compositionally biased toward basic residues; that stretch reads KTGKNRKLKSKRVK. 2 stretches are compositionally biased toward polar residues: residues 829–838 and 936–956; these read TAWSPSDTSQ and TLTS…TSIP. Positions 888–1071 are interaction with PPARG; sequence QFAVQPPPFP…NEDLCSASGS (184 aa). Phosphoserine is present on S945. The segment covering 959-972 has biased composition (low complexity); the sequence is PCACPATRATPPSA. A Phosphoserine modification is found at S977. The short motif at 989 to 996 is the Nuclear export signal 3 element; sequence LQLNLLQL. The tract at residues 1018–1050 is disordered; it reads VGADCKPGTSRDQQPKAPLTRDEPSDTQNSDAL. Residues 1057 to 1061 carry the LXXLL motif; sequence LNLLL. Residues 1077–1106 form a disordered region; it reads LGSGSLGCDASPSGAGSSDTSHTSKYFGSI. Over residues 1090-1106 the composition is skewed to polar residues; sequence GAGSSDTSHTSKYFGSI. S1124 bears the Phosphoserine mark. The interval 1155 to 1255 is CRY binding domain; sequence SRNLEAVLKE…PLNHRIEEQT (101 aa). The tract at residues 1231-1255 is disordered; sequence GLSEVSDTKEDENGSPLNHRIEEQT.

In terms of assembly, homodimer. Component of the circadian core oscillator, which includes the CRY proteins, CLOCK or NPAS2, BMAL1 or BMAL2, CSNK1D and/or CSNK1E, TIMELESS, and the PER proteins. Interacts with CLOCK-BMAL1 (off DNA). Interacts with BMAL2. Interacts directly with PER1 and PER3, and through a C-terminal domain, with CRY1 and CRY2. Interacts (via PAS 2 domain) with TIMELESS. Interacts with NFIL3. Different large complexes have been identified with different repressive functions. The core of PER complexes is composed of at least PER1, PER2, PER3, CRY1, CRY2, CSNK1D and/or CSNK1E. The large PER complex involved in the repression of transcriptional termination is composed of at least PER2, CDK9, DDX5, DHX9, NCBP1 and POLR2A (active). The large PER complex involved in the histone deacetylation is composed of at least HDAC1, PER2, SFPQ and SIN3A. The large PER complex involved in the histone methylation is composed of at least PER2, CBX3, TRIM28, SUV39H1 and/or SUV39H2; CBX3 mediates the formation of the complex. Interacts with SETX; the interaction inhibits termination of circadian target genes. Interacts with the nuclear receptors HNF4A, NR1D1, NR4A2, RORA, PPARA, PPARG and THRA; the interaction with at least PPARG is ligand dependent. Interacts with PML. Interacts (phosphorylated) with BTRC and FBXW11; the interactions trigger proteasomal degradation. Interacts with NONO and SFPQ. Interacts with CAVIN3. Interacts with MAGEL2. Interacts with MAP1LC3B. Interacts with HNF4A. In terms of processing, acetylated. Deacetylated by SIRT1, resulting in decreased protein stability. Deacetylated by SIRT6, preventing its degradation by the proteasome, resulting in increased protein stability. Phosphorylated by CSNK1E and CSNK1D. Phosphorylation results in PER2 protein degradation. May be dephosphorylated by PP1. Post-translationally, ubiquitinated, leading to its proteasomal degradation. Ubiquitination may be inhibited by CRY1. Widely expressed. Found in heart, brain, placenta, lung, liver, skeleatal muscle, kidney and pancreas. High levels in skeletal muscle and pancreas. Low levels in lung. Isoform 2 is expressed in keratinocytes (at protein level).

It localises to the nucleus. The protein localises to the cytoplasm. Its subcellular location is the perinuclear region. The protein resides in the nucleolus. Functionally, transcriptional repressor which forms a core component of the circadian clock. The circadian clock, an internal time-keeping system, regulates various physiological processes through the generation of approximately 24 hour circadian rhythms in gene expression, which are translated into rhythms in metabolism and behavior. It is derived from the Latin roots 'circa' (about) and 'diem' (day) and acts as an important regulator of a wide array of physiological functions including metabolism, sleep, body temperature, blood pressure, endocrine, immune, cardiovascular, and renal function. Consists of two major components: the central clock, residing in the suprachiasmatic nucleus (SCN) of the brain, and the peripheral clocks that are present in nearly every tissue and organ system. Both the central and peripheral clocks can be reset by environmental cues, also known as Zeitgebers (German for 'timegivers'). The predominant Zeitgeber for the central clock is light, which is sensed by retina and signals directly to the SCN. The central clock entrains the peripheral clocks through neuronal and hormonal signals, body temperature and feeding-related cues, aligning all clocks with the external light/dark cycle. Circadian rhythms allow an organism to achieve temporal homeostasis with its environment at the molecular level by regulating gene expression to create a peak of protein expression once every 24 hours to control when a particular physiological process is most active with respect to the solar day. Transcription and translation of core clock components (CLOCK, NPAS2, BMAL1, BMAL2, PER1, PER2, PER3, CRY1 and CRY2) plays a critical role in rhythm generation, whereas delays imposed by post-translational modifications (PTMs) are important for determining the period (tau) of the rhythms (tau refers to the period of a rhythm and is the length, in time, of one complete cycle). A diurnal rhythm is synchronized with the day/night cycle, while the ultradian and infradian rhythms have a period shorter and longer than 24 hours, respectively. Disruptions in the circadian rhythms contribute to the pathology of cardiovascular diseases, cancer, metabolic syndrome and aging. A transcription/translation feedback loop (TTFL) forms the core of the molecular circadian clock mechanism. Transcription factors, CLOCK or NPAS2 and BMAL1 or BMAL2, form the positive limb of the feedback loop, act in the form of a heterodimer and activate the transcription of core clock genes and clock-controlled genes (involved in key metabolic processes), harboring E-box elements (5'-CACGTG-3') within their promoters. The core clock genes: PER1/2/3 and CRY1/2 which are transcriptional repressors form the negative limb of the feedback loop and interact with the CLOCK|NPAS2-BMAL1|BMAL2 heterodimer inhibiting its activity and thereby negatively regulating their own expression. This heterodimer also activates nuclear receptors NR1D1/2 and RORA/B/G, which form a second feedback loop and which activate and repress BMAL1 transcription, respectively. PER1 and PER2 proteins transport CRY1 and CRY2 into the nucleus with appropriate circadian timing, but also contribute directly to repression of clock-controlled target genes through interaction with several classes of RNA-binding proteins, helicases and others transcriptional repressors. PER appears to regulate circadian control of transcription by at least three different modes. First, interacts directly with the CLOCK-BMAL1 at the tail end of the nascent transcript peak to recruit complexes containing the SIN3-HDAC that remodel chromatin to repress transcription. Second, brings H3K9 methyltransferases such as SUV39H1 and SUV39H2 to the E-box elements of the circadian target genes, like PER2 itself or PER1. The recruitment of each repressive modifier to the DNA seems to be very precisely temporally orchestrated by the large PER complex, the deacetylases acting before than the methyltransferases. Additionally, large PER complexes are also recruited to the target genes 3' termination site through interactions with RNA-binding proteins and helicases that may play a role in transcription termination to regulate transcription independently of CLOCK-BMAL1 interactions. Recruitment of large PER complexes to the elongating polymerase at PER and CRY termination sites inhibited SETX action, impeding RNA polymerase II release and thereby repressing transcriptional reinitiation. May propagate clock information to metabolic pathways via the interaction with nuclear receptors. Coactivator of PPARA and corepressor of NR1D1, binds rhythmically at the promoter of nuclear receptors target genes like BMAL1 or G6PC1. Directly and specifically represses PPARG proadipogenic activity by blocking PPARG recruitment to target promoters and thereby inhibiting transcriptional activation. Required for fatty acid and lipid metabolism, is involved as well in the regulation of circulating insulin levels. Plays an important role in the maintenance of cardiovascular functions through the regulation of NO and vasodilatatory prostaglandins production in aortas. Controls circadian glutamate uptake in synaptic vesicles through the regulation of VGLUT1 expression. May also be involved in the regulation of inflammatory processes. Represses the CLOCK-BMAL1 induced transcription of BHLHE40/DEC1 and ATF4. Negatively regulates the formation of the TIMELESS-CRY1 complex by competing with TIMELESS for binding to CRY1. This is Period circadian protein homolog 2 (PER2) from Homo sapiens (Human).